We begin with the raw amino-acid sequence, 374 residues long: uncharacterized protein (374 aa).

A coiled-coil region spans residues 39-66 (RDVRKHLESRDAKQELIDSLEEAVRDSR).

This is an uncharacterized protein from Mycobacterium tuberculosis (strain CDC 1551 / Oshkosh).